The sequence spans 457 residues: MALWGGRFTQPADQRFKQFNDSLRFDYRLAEQDIIGSVAWSKALVTVNVLTAAEQQQLESALTALLDEVRADPQQILASDAEDIHSWVEGKLIDKVGALGKKLHTGRSRNDQVATDLKLWCKEQVSELLNATRQFQQALVATAEAHQDAVMPGYTHLQRAQPVTFAHWCLAYVEMLARDESRLQDTLKRLDVSPLGCGALAGTAYDIDREQLAGWLGFASATRNSLDTVSDRDHVLELLSDASIGMVHLSRFAEDLIFFNTGEAGFVELSDKVTSGSSLMPQKKNPDALELIRGKVGRVQGALTAMSMTLKGLPLAYNKDMQEDKEGLFDALDTWADCLHMAALVLDGIQVKRPRCQEAAEQGYANSTELADYLVAKGVPFREAHHIVGETVVEAIKQGVALEALKLSDLQKFSHVIGDDVYPILSLQSCLDKRNAKGGVSLHQISQAITEAKQRLA.

The protein belongs to the lyase 1 family. Argininosuccinate lyase subfamily.

The protein resides in the cytoplasm. The enzyme catalyses 2-(N(omega)-L-arginino)succinate = fumarate + L-arginine. It functions in the pathway amino-acid biosynthesis; L-arginine biosynthesis; L-arginine from L-ornithine and carbamoyl phosphate: step 3/3. The protein is Argininosuccinate lyase of Erwinia tasmaniensis (strain DSM 17950 / CFBP 7177 / CIP 109463 / NCPPB 4357 / Et1/99).